The chain runs to 203 residues: Urease accessory protein UreG (203 aa).

A GTP-binding site is contributed by 14–21 (GPVGSGKT).

The protein belongs to the SIMIBI class G3E GTPase family. UreG subfamily. In terms of assembly, homodimer. UreD, UreF and UreG form a complex that acts as a GTP-hydrolysis-dependent molecular chaperone, activating the urease apoprotein by helping to assemble the nickel containing metallocenter of UreC. The UreE protein probably delivers the nickel.

It is found in the cytoplasm. Functionally, facilitates the functional incorporation of the urease nickel metallocenter. This process requires GTP hydrolysis, probably effectuated by UreG. In Rhizobium johnstonii (strain DSM 114642 / LMG 32736 / 3841) (Rhizobium leguminosarum bv. viciae), this protein is Urease accessory protein UreG.